A 430-amino-acid chain; its full sequence is Tol-Pal system protein TolB (430 aa).

The signal sequence occupies residues 1–21 (MKQAFRVALGFFLLWASVLHA).

This sequence belongs to the TolB family. In terms of assembly, the Tol-Pal system is composed of five core proteins: the inner membrane proteins TolA, TolQ and TolR, the periplasmic protein TolB and the outer membrane protein Pal. They form a network linking the inner and outer membranes and the peptidoglycan layer.

It is found in the periplasm. Part of the Tol-Pal system, which plays a role in outer membrane invagination during cell division and is important for maintaining outer membrane integrity. TolB occupies a key intermediary position in the Tol-Pal system because it communicates directly with both membrane-embedded components, Pal in the outer membrane and TolA in the inner membrane. This Sodalis glossinidius (strain morsitans) protein is Tol-Pal system protein TolB.